We begin with the raw amino-acid sequence, 109 residues long: RNA-binding protein Hfq (109 aa).

A Sm domain is found at 9–68; sequence DPFLNALRKEKVSVSVYLVNGIKLQGQVEAFDQFCIVLRNTVNQMVYKHAISTIVPAKSV. The segment at 77 to 109 is disordered; the sequence is PYHQNSNDEQDENVDDIHSDDLEIQENEGNIHE.

This sequence belongs to the Hfq family. As to quaternary structure, homohexamer.

RNA chaperone that binds small regulatory RNA (sRNAs) and mRNAs to facilitate mRNA translational regulation in response to envelope stress, environmental stress and changes in metabolite concentrations. Also binds with high specificity to tRNAs. This is RNA-binding protein Hfq from Francisella tularensis subsp. tularensis (strain FSC 198).